Reading from the N-terminus, the 388-residue chain is Salivary protein Tsal2A (388 aa).

A signal peptide spans methionine 1 to valine 18. A glycan (N-linked (GlcNAc...) asparagine) is linked at asparagine 260.

Belongs to the DNA/RNA non-specific endonuclease family. A divalent metal cation serves as cofactor. As to expression, saliva (at protein level).

It is found in the secreted. In terms of biological role, binds double-stranded DNA (dsDNA) with high affinity. Binds double-stranded RNA. Binds single-stranded DNA with lower affinity and with a preference for purine-rich sequences. Shows residual nuclease activity for dsDNA. Facilitates blood meal intake by lowering the local viscosity created by the release of host DNA. This is Salivary protein Tsal2A from Glossina morsitans morsitans (Savannah tsetse fly).